A 458-amino-acid polypeptide reads, in one-letter code: Probable alpha-L-glutamate ligase (458 aa).

The tract at residues 1 to 162 (MSDNKFIIGS…YGVKTAKKSG (162 aa)) is unknown. The tract at residues 163–458 (LKIGLLASNP…IEKKLGWKAD (296 aa)) is alpha-L-glutamate ligase. Residues 267 to 450 (LQLLQKNNLD…IAGAMIESIE (184 aa)) enclose the ATP-grasp domain. ATP-binding positions include K304, 341–342 (EF), D350, and 374–376 (RAN). Mg(2+) contacts are provided by D411, E423, and N425. Residues D411, E423, and N425 each contribute to the Mn(2+) site.

In the C-terminal section; belongs to the RimK family. Mg(2+) serves as cofactor. It depends on Mn(2+) as a cofactor.

This Shewanella pealeana (strain ATCC 700345 / ANG-SQ1) protein is Probable alpha-L-glutamate ligase.